A 545-amino-acid chain; its full sequence is Chaperonin GroEL (545 aa).

Residues 30-33 (TLGP), lysine 51, 87-91 (DGTTT), glycine 415, and aspartate 495 each bind ATP.

The protein belongs to the chaperonin (HSP60) family. Forms a cylinder of 14 subunits composed of two heptameric rings stacked back-to-back. Interacts with the co-chaperonin GroES.

The protein localises to the cytoplasm. It carries out the reaction ATP + H2O + a folded polypeptide = ADP + phosphate + an unfolded polypeptide.. Its function is as follows. Together with its co-chaperonin GroES, plays an essential role in assisting protein folding. The GroEL-GroES system forms a nano-cage that allows encapsulation of the non-native substrate proteins and provides a physical environment optimized to promote and accelerate protein folding. The chain is Chaperonin GroEL from Shewanella baltica (strain OS185).